Consider the following 242-residue polypeptide: ATP synthase subunit a (242 aa).

6 helical membrane-spanning segments follow: residues 29 to 49 (SSIY…LAFY), 84 to 104 (FIPL…LGMT), 114 to 134 (IIVT…VGFV), 140 to 160 (FLTL…MIVI), 181 to 201 (MAGH…MIYL), and 203 to 223 (FLPI…AILQ).

Belongs to the ATPase A chain family. F-type ATPases have 2 components, CF(1) - the catalytic core - and CF(0) - the membrane proton channel. CF(1) has five subunits: alpha(3), beta(3), gamma(1), delta(1), epsilon(1). CF(0) has three main subunits: a(1), b(2) and c(9-12). The alpha and beta chains form an alternating ring which encloses part of the gamma chain. CF(1) is attached to CF(0) by a central stalk formed by the gamma and epsilon chains, while a peripheral stalk is formed by the delta and b chains.

It localises to the cell inner membrane. Its function is as follows. Key component of the proton channel; it plays a direct role in the translocation of protons across the membrane. The chain is ATP synthase subunit a from Rickettsia akari (strain Hartford).